Reading from the N-terminus, the 116-residue chain is Cystatin (116 aa).

A Secondary area of contact motif is present at residues 53–57 (QLVSG). 2 cysteine pairs are disulfide-bonded: cysteine 71/cysteine 81 and cysteine 95/cysteine 115. A Phosphoserine modification is found at serine 80.

It belongs to the cystatin family.

The protein localises to the secreted. This protein binds tightly to and inhibits papain and cathepsin B. This Coturnix japonica (Japanese quail) protein is Cystatin.